An 871-amino-acid polypeptide reads, in one-letter code: Protein translocase subunit SecA (871 aa).

Residues Gln80, 98–102, and Asp537 each bind ATP; that span reads GEGKT.

This sequence belongs to the SecA family. In terms of assembly, monomer and homodimer. Part of the essential Sec protein translocation apparatus which comprises SecA, SecYEG and auxiliary proteins SecDF. Other proteins may also be involved. A single SecA monomer interacts with SecY in the channel.

It is found in the cell inner membrane. Its subcellular location is the cytoplasm. It catalyses the reaction ATP + H2O + cellular proteinSide 1 = ADP + phosphate + cellular proteinSide 2.. Functionally, part of the Sec protein translocase complex. Interacts with the SecYEG preprotein conducting channel. Has a central role in coupling the hydrolysis of ATP to the transfer of proteins into and across the cell membrane, serving as an ATP-driven molecular motor driving the stepwise translocation of polypeptide chains across the membrane. The protein is Protein translocase subunit SecA of Thermotoga maritima (strain ATCC 43589 / DSM 3109 / JCM 10099 / NBRC 100826 / MSB8).